A 308-amino-acid polypeptide reads, in one-letter code: Adipolin (308 aa).

The N-terminal stretch at 1-21 (MWAWGWAAAALLWLQTAGAGA) is a signal peptide. The disordered stretch occupies residues 36 to 119 (DSPNITTSNR…PPGSPGVGVT (84 aa)). Residue N39 is glycosylated (N-linked (GlcNAc...) asparagine). Positions 82-93 (RKRCRGRDKKSR) are enriched in basic residues. The span at 99 to 113 (PGPPGPPGPPGPPGS) shows a compositional bias: pro residues. Positions 153 to 308 (QRLVVEAFYC…SSFSGMLLGT (156 aa)) constitute a C1q domain.

It belongs to the adipolin/erythroferrone family. As to quaternary structure, homomultimer; disulfide-linked. Adipolin fC1QTNF12: homotrimer; disulfide-linked. Adipolin gC1QTNF12: homodimer; disulfide-linked. May interact with ERFE. In terms of processing, processed into Adipolin fC1QTNF12 and Adipolin gC1QTNF12 by FURIN. Insulin enhances endogenous C1QTNF12 cleavage. As to expression, widely expressed, with high expression in subcutaneous and epididymal white adipose tissues and brown adipose tissue. Expressed in adipocytes (at protein level).

It is found in the secreted. Functionally, insulin-sensitizing adipocyte-secreted protein (adipokine) that regulates glucose metabolism in liver and adipose tissue. Promotes glucose uptake in adipocytes and suppresses de novo glucose production in hepatocytes via the PI3K-Akt signaling pathway. Administration lead to reduction of blood glucose. Able to attenuate inflammation in fat tissue. In terms of biological role, acts by activating the Akt signaling in hepatocytes and adipocytes. Not able to increase insulin-stimulated glucose uptake in adipocytes. Its function is as follows. Acts by activating the MAP kinase. Increases insulin-stimulated glucose uptake in adipocytes. This Mus musculus (Mouse) protein is Adipolin (C1qtnf12).